We begin with the raw amino-acid sequence, 619 residues long: Protein CPn_1016/CP_0837/CPj1016/CpB1054 (619 aa).

The interval 591-619 (NAKKSEEQTSPQETPEVIRVSYPTTTSAL) is disordered.

Belongs to the chlamydial CPn_1016/CT_858/TC_0248 family.

This is Protein CPn_1016/CP_0837/CPj1016/CpB1054 from Chlamydia pneumoniae (Chlamydophila pneumoniae).